A 527-amino-acid chain; its full sequence is Peptide chain release factor 3 (527 aa).

One can recognise a tr-type G domain in the interval 9-277 (AKRRTFAIIS…AVVDWAPRPL (269 aa)). Residues 18–25 (SHPDAGKT), 86–90 (DTPGH), and 140–143 (NKLD) each bind GTP.

Belongs to the TRAFAC class translation factor GTPase superfamily. Classic translation factor GTPase family. PrfC subfamily.

The protein resides in the cytoplasm. In terms of biological role, increases the formation of ribosomal termination complexes and stimulates activities of RF-1 and RF-2. It binds guanine nucleotides and has strong preference for UGA stop codons. It may interact directly with the ribosome. The stimulation of RF-1 and RF-2 is significantly reduced by GTP and GDP, but not by GMP. This chain is Peptide chain release factor 3, found in Pseudomonas putida (strain W619).